A 159-amino-acid chain; its full sequence is Phosphopantetheine adenylyltransferase (159 aa).

It belongs to the eukaryotic CoaD family.

Its subcellular location is the cytoplasm. The enzyme catalyses (R)-4'-phosphopantetheine + ATP + H(+) = 3'-dephospho-CoA + diphosphate. It participates in cofactor biosynthesis; coenzyme A biosynthesis. Reversibly transfers an adenylyl group from ATP to 4'-phosphopantetheine, yielding dephospho-CoA (dPCoA) and pyrophosphate. This is Phosphopantetheine adenylyltransferase from Thermococcus gammatolerans (strain DSM 15229 / JCM 11827 / EJ3).